The chain runs to 469 residues: UDP-glycosyltransferase 43 (469 aa).

UDP-alpha-D-glucose contacts are provided by residues Ser280, 345-346, 363-371, and 385-388; these read WV, HCGWNSILE, and YSEQ.

This sequence belongs to the UDP-glycosyltransferase family.

With respect to regulation, inhibited by Cu(2+) or Zn(2+). Glycosyltransferase that catalyzes the C-glucosylation of daidzein to puerarin. Shows activity with the isoflavones daidzein and genistein, but has no activity towards flavonoids such as 2-hydroxynaringenin. Can use UDP-glucose, but not UDP-galactose or UDP-glucuronic acid as sugar donor. Does not require bivalent cations for activity. This is UDP-glycosyltransferase 43 from Pueraria montana var. lobata (Kudzu vine).